The sequence spans 671 residues: Beta-galactosidase 1 (671 aa).

Positions 1–18 (MKLIVLIFFLLFINLNYC) are cleaved as a signal peptide. E200 (proton donor) is an active-site residue. N-linked (GlcNAc...) asparagine glycosylation is present at N228. E288 (nucleophile) is an active-site residue. N-linked (GlcNAc...) asparagine glycosylation is found at N321, N391, N400, N499, N509, N564, and N595.

Belongs to the glycosyl hydrolase 35 family.

It is found in the lysosome. It catalyses the reaction Hydrolysis of terminal non-reducing beta-D-galactose residues in beta-D-galactosides.. Its function is as follows. Cleaves beta-linked terminal galactosyl residues from gangliosides, glycoproteins, and glycosaminoglycans. This is Beta-galactosidase 1 (glb1) from Dictyostelium discoideum (Social amoeba).